Consider the following 276-residue polypeptide: Malectin-A (276 aa).

Positions 1 to 26 (MLSIRTVLGPLATILLTVLGPFGAHG) are cleaved as a signal peptide. Residues 27–253 (SGLADKVIWA…TPNPYASDNS (227 aa)) are Lumenal-facing. A carbohydrate contacts are provided by Tyr67, Tyr89, Tyr116, Phe117, and Asp186. Residues 204–247 (PMLQPHPGLEKKEEEEEEEEEEGSTSKKQINKNRVQSGPRTPNP) form a disordered region. Positions 216–226 (EEEEEEEEEEG) are enriched in acidic residues. Residues 229-247 (SKKQINKNRVQSGPRTPNP) show a composition bias toward polar residues. N-linked (GlcNAc...) asparagine glycosylation occurs at Asn252. The chain crosses the membrane as a helical span at residues 254–274 (SLMFPILVAFGVFIPTLFCLC). Residues 275 to 276 (RL) are Cytoplasmic-facing.

It belongs to the malectin family. As to expression, widely expressed throughout development including the anterior neuroectoderm and neural crest at stages 18 and 20, and the retina, hatching gland, otic vesicle, epibranchial placodes, pronephros and tail tip of later states. At stage 41, expressed in the liver, pancreas, branchial arches and proctodeum. Expressed broadly in adults in fat, intestine, gall bladder, eye, muscle, kidney, stomach, liver, heart, pancreas and lung.

It is found in the endoplasmic reticulum membrane. Carbohydrate-binding protein with a strong ligand preference for Glc2-N-glycan. May play a role in the early steps of protein N-glycosylation. Can bind di- or higher oligomers but not monomers of glucose, including maltose, maltotriose, maltotetraose, maltoheptaose, nigerose, kojibose, cellobiose and isomaltose, although based on their subcellular locations, these are unlikely to all be physiological ligands. The chain is Malectin-A from Xenopus laevis (African clawed frog).